Consider the following 394-residue polypeptide: Chalcone synthase 4 (394 aa).

The active site involves Cys-165.

Belongs to the thiolase-like superfamily. Chalcone/stilbene synthases family.

It catalyses the reaction (E)-4-coumaroyl-CoA + 3 malonyl-CoA + 3 H(+) = 2',4,4',6'-tetrahydroxychalcone + 3 CO2 + 4 CoA. Its pathway is secondary metabolite biosynthesis; flavonoid biosynthesis. The primary product of this enzyme is 4,2',4',6'-tetrahydroxychalcone (also termed naringenin-chalcone or chalcone) which can under specific conditions spontaneously isomerize into naringenin. In Bromheadia finlaysoniana (Orchid), this protein is Chalcone synthase 4 (CHS4).